The following is a 496-amino-acid chain: uncharacterized protein (496 aa).

A run of 12 helical transmembrane segments spans residues 33-53 (FLKG…LIFA), 89-109 (LNFL…YTLI), 127-147 (PWFV…FTFF), 154-174 (VFNL…YEIF), 193-213 (LIIA…TPLV), 247-267 (IILI…NTNF), 285-305 (LWFI…VFAY), 320-340 (LWVY…YMVF), 355-375 (LLNL…VTLF), 382-402 (SLIN…IYIF), 411-431 (LLVL…IVGF), and 455-475 (VQIM…YLTI).

The protein resides in the cell membrane. This is an uncharacterized protein from Ureaplasma parvum serovar 3 (strain ATCC 700970).